Here is a 309-residue protein sequence, read N- to C-terminus: D-alanine--D-alanine ligase (309 aa).

Residues 99–304 form the ATP-grasp domain; sequence KRVLLQAGIP…FPDLVQKIVD (206 aa). An ATP-binding site is contributed by 132 to 187; the sequence is LKELGLPVVIKAPTQGSTIGTFIVREEGELEPAIAGALKYDLSFMAEAYLAGPEIT. Asp-258, Glu-271, and Asn-273 together coordinate Mg(2+).

Belongs to the D-alanine--D-alanine ligase family. Mg(2+) serves as cofactor. Mn(2+) is required as a cofactor.

It is found in the cytoplasm. It catalyses the reaction 2 D-alanine + ATP = D-alanyl-D-alanine + ADP + phosphate + H(+). It functions in the pathway cell wall biogenesis; peptidoglycan biosynthesis. Cell wall formation. This is D-alanine--D-alanine ligase from Moorella thermoacetica (strain ATCC 39073 / JCM 9320).